Here is a 371-residue protein sequence, read N- to C-terminus: Cytochrome b (371 aa).

4 helical membrane-spanning segments follow: residues 25–45 (FGSM…FLAV), 69–90 (WMMQ…YIHI), 105–125 (WLSG…GYVL), and 170–190 (FSAL…LHIM). Heme b contacts are provided by H75 and H89. Heme b is bound by residues H174 and H188. H193 contacts a ubiquinone. A run of 4 helical transmembrane segments spans residues 218–238 (YKDL…VSFL), 280–300 (LGGA…PFTH), 312–332 (IMQL…WSAT), and 339–358 (FTVI…IMNP).

It belongs to the cytochrome b family. The cytochrome bc1 complex contains 3 respiratory subunits (MT-CYB, CYC1 and UQCRFS1), 2 core proteins (UQCRC1 and UQCRC2) and probably 6 low-molecular weight proteins. Heme b serves as cofactor.

Its subcellular location is the mitochondrion inner membrane. Its function is as follows. Component of the ubiquinol-cytochrome c reductase complex (complex III or cytochrome b-c1 complex) that is part of the mitochondrial respiratory chain. The b-c1 complex mediates electron transfer from ubiquinol to cytochrome c. Contributes to the generation of a proton gradient across the mitochondrial membrane that is then used for ATP synthesis. This is Cytochrome b (MT-CYB) from Eryx elegans (Central Asian sand boa).